Reading from the N-terminus, the 294-residue chain is MGCGHSRLSCCKPPKKRRQRPDQPPKPEPQELGPLNGDTATTDHVCASEEAEQHQKAITRILQQHEEDKKKWAQQVEKERELELGEKLNEQRKVLEGEHVEALRVLQASYEQDKEALTHSFQEAKAALQETIDRLTAQIEAFQAKMKRAEESILSRDYKKHIQEHGSLSQFWEQELESLHFVIEMKNERIHELDKRLILMETVKEKNLLLEEKITTLQQENEDLHARGRNQMVVSRQLSEDLLLAREALEKESQSRRQLQQEKEELLYRVLGADAAPAFPLASVTPTEVSFLAT.

Positions 1–43 (MGCGHSRLSCCKPPKKRRQRPDQPPKPEPQELGPLNGDTATTD) are disordered. A lipid anchor (N-myristoyl glycine) is attached at Gly2. Over residues 20–29 (RPDQPPKPEP) the composition is skewed to basic and acidic residues. A coiled-coil region spans residues 47–270 (ASEEAEQHQK…QEKEELLYRV (224 aa)). Phosphoserine is present on residues Ser152 and Ser239.

Belongs to the CCDC69 family.

It is found in the cytoplasm. It localises to the cytoskeleton. The protein localises to the spindle. Its subcellular location is the midbody. Functionally, may act as a scaffold to regulate the recruitment and assembly of spindle midzone components. Required for the localization of AURKB and PLK1 to the spindle midzone. The polypeptide is Coiled-coil domain-containing protein 69 (CCDC69) (Bos taurus (Bovine)).